The chain runs to 659 residues: UvrABC system protein B (659 aa).

In terms of domain architecture, Helicase ATP-binding spans 25 to 182 (QSIENGNRGQ…KKLIEIQYER (158 aa)). 38–45 (GVTGSGKT) provides a ligand contact to ATP. A Beta-hairpin motif is present at residues 91 to 114 (YYDYYQPEAYVPQTDTFIEKDASI). The 154-residue stretch at 429–582 (QIDDLYGEIQ…QMEYNEEHNI (154 aa)) folds into the Helicase C-terminal domain. A UVR domain is found at 622–657 (EKLIEQYEEEMKEAAKNLQFERAAELRDIIKDLKEN).

This sequence belongs to the UvrB family. Forms a heterotetramer with UvrA during the search for lesions. Interacts with UvrC in an incision complex.

The protein localises to the cytoplasm. In terms of biological role, the UvrABC repair system catalyzes the recognition and processing of DNA lesions. A damage recognition complex composed of 2 UvrA and 2 UvrB subunits scans DNA for abnormalities. Upon binding of the UvrA(2)B(2) complex to a putative damaged site, the DNA wraps around one UvrB monomer. DNA wrap is dependent on ATP binding by UvrB and probably causes local melting of the DNA helix, facilitating insertion of UvrB beta-hairpin between the DNA strands. Then UvrB probes one DNA strand for the presence of a lesion. If a lesion is found the UvrA subunits dissociate and the UvrB-DNA preincision complex is formed. This complex is subsequently bound by UvrC and the second UvrB is released. If no lesion is found, the DNA wraps around the other UvrB subunit that will check the other stand for damage. This Clostridium perfringens (strain ATCC 13124 / DSM 756 / JCM 1290 / NCIMB 6125 / NCTC 8237 / Type A) protein is UvrABC system protein B.